The chain runs to 216 residues: 3-isopropylmalate dehydratase small subunit (216 aa).

The protein belongs to the LeuD family. LeuD type 1 subfamily. Heterodimer of LeuC and LeuD.

It carries out the reaction (2R,3S)-3-isopropylmalate = (2S)-2-isopropylmalate. It functions in the pathway amino-acid biosynthesis; L-leucine biosynthesis; L-leucine from 3-methyl-2-oxobutanoate: step 2/4. Catalyzes the isomerization between 2-isopropylmalate and 3-isopropylmalate, via the formation of 2-isopropylmaleate. The polypeptide is 3-isopropylmalate dehydratase small subunit (Burkholderia thailandensis (strain ATCC 700388 / DSM 13276 / CCUG 48851 / CIP 106301 / E264)).